We begin with the raw amino-acid sequence, 543 residues long: Protein pbn1 (543 aa).

Topologically, residues 1-503 are lumenal; it reads MRRRITFVQR…KGFFQSKAIE (503 aa). A glycan (N-linked (GlcNAc...) asparagine) is linked at Asn409. Residues 504–524 traverse the membrane as a helical segment; the sequence is LGTMIVIGLGSLWVLWKLGAI. Residues 525–543 are Cytoplasmic-facing; that stretch reads AWSSGTRPQRKSTKQKKSE.

It belongs to the PIGX family.

The protein resides in the endoplasmic reticulum membrane. It functions in the pathway glycolipid biosynthesis; glycosylphosphatidylinositol-anchor biosynthesis. Its function is as follows. Required for proper folding and/or the stability of a subset of proteins in the endoplasmic reticulum. Component of glycosylphosphatidylinositol-mannosyltransferase 1 which transfers the first of the 4 mannoses in the GPI-anchor precursors during GPI-anchor biosynthesis. Probably acts by stabilizing the mannosyltransferase gpi14. The polypeptide is Protein pbn1 (pbn1) (Aspergillus oryzae (strain ATCC 42149 / RIB 40) (Yellow koji mold)).